A 346-amino-acid chain; its full sequence is N-acetyl-gamma-glutamyl-phosphate reductase (346 aa).

Residue Cys-151 is part of the active site.

This sequence belongs to the NAGSA dehydrogenase family. Type 1 subfamily.

The protein localises to the cytoplasm. It carries out the reaction N-acetyl-L-glutamate 5-semialdehyde + phosphate + NADP(+) = N-acetyl-L-glutamyl 5-phosphate + NADPH + H(+). It functions in the pathway amino-acid biosynthesis; L-arginine biosynthesis; N(2)-acetyl-L-ornithine from L-glutamate: step 3/4. Catalyzes the NADPH-dependent reduction of N-acetyl-5-glutamyl phosphate to yield N-acetyl-L-glutamate 5-semialdehyde. The protein is N-acetyl-gamma-glutamyl-phosphate reductase of Ehrlichia canis (strain Jake).